Here is a 344-residue protein sequence, read N- to C-terminus: UDP-glycosyltransferase 73C4 (344 aa).

UDP-alpha-D-glucose contacts are provided by residues Ser-145, 202-203 (WA), 220-228 (HCGWNSSLE), and 242-245 (FAEQ).

The protein belongs to the UDP-glycosyltransferase family. Expressed in flowers and fruits.

The protein localises to the cytoplasm. The protein resides in the nucleus. Probable glucosyltransferase that cannot glycosylate abscisic acid (ABA) and auxin (IAA). The protein is UDP-glycosyltransferase 73C4 of Solanum lycopersicum (Tomato).